Reading from the N-terminus, the 335-residue chain is Ankyrin repeat and SOCS box protein 1 (335 aa).

ANK repeat units follow at residues 36–68, 77–106, 110–139, 143–172, 191–220, and 235–265; these read CEDT…RINE, LPCT…EVDL, KGQT…DPNG, HRST…DVDV, LVVC…NPDF, and SPGC…NLNL. In terms of domain architecture, SOCS box spans 286 to 335; the sequence is LQVFKEARSVPRTLLCLCRVAVRRALGKHRLHLIPSLPLPDPIKKFLLHE.

This sequence belongs to the ankyrin SOCS box (ASB) family. In terms of assembly, interacts with CUL5 and RNF7. Interacts with TAB2 and TAB3.

Its subcellular location is the cytoplasm. It participates in protein modification; protein ubiquitination. In terms of biological role, probable substrate-recognition component of a SCF-like ECS (Elongin-Cullin-SOCS-box protein) E3 ligase complex which mediates the ubiquitination and subsequent proteasomal degradation of target proteins. Mediates Notch-induced ubiquitination and degradation of TCF3/E2A and JAK2. Functions as a tumor suppressor by enhancing CHCHD3 'Lys-48'-linked ubiquitination, leading to inhibition of the CHCHD3/ROS signaling pathway. Suppresses TAB2-linked 'Lys-48' polyubiquitination and consequently facilitates the initiation of NF-kappa-B and MAPK signaling cascades. May play a role in testis development. In Homo sapiens (Human), this protein is Ankyrin repeat and SOCS box protein 1 (ASB1).